We begin with the raw amino-acid sequence, 501 residues long: Cytochrome P450 7A1 (501 aa).

Residues 4–24 (ISLLGGIVTAVCCCLWLLLGM) form a helical membrane-spanning segment. Cys-441 lines the heme pocket.

Belongs to the cytochrome P450 family. The cofactor is heme.

Its subcellular location is the endoplasmic reticulum membrane. The protein resides in the microsome membrane. It carries out the reaction cholesterol + reduced [NADPH--hemoprotein reductase] + O2 = 7alpha-hydroxycholesterol + oxidized [NADPH--hemoprotein reductase] + H2O + H(+). The enzyme catalyses 4beta-hydroxycholesterol + reduced [NADPH--hemoprotein reductase] + O2 = 4beta,7alpha-dihydroxycholesterol + oxidized [NADPH--hemoprotein reductase] + H2O + H(+). The catalysed reaction is lathosterol + reduced [NADPH--hemoprotein reductase] + O2 = 7alpha,8alpha-epoxy-5alpha-cholestan-3beta-ol + oxidized [NADPH--hemoprotein reductase] + H2O + H(+). It catalyses the reaction lathosterol + reduced [NADPH--hemoprotein reductase] + O2 = 5alpha-cholestan-7-oxo-3beta-ol + oxidized [NADPH--hemoprotein reductase] + H2O + H(+). It carries out the reaction 7-dehydrocholesterol + reduced [NADPH--hemoprotein reductase] + O2 = 7-oxocholesterol + oxidized [NADPH--hemoprotein reductase] + H2O + H(+). The enzyme catalyses (24S)-hydroxycholesterol + reduced [NADPH--hemoprotein reductase] + O2 = (24S)-7alpha-dihydroxycholesterol + oxidized [NADPH--hemoprotein reductase] + H2O + H(+). The catalysed reaction is (24R)-hydroxycholesterol + reduced [NADPH--hemoprotein reductase] + O2 = (24R)-7alpha-dihydroxycholesterol + oxidized [NADPH--hemoprotein reductase] + H2O + H(+). Its pathway is lipid metabolism; bile acid biosynthesis. It functions in the pathway steroid metabolism; cholesterol degradation. In terms of biological role, a cytochrome P450 monooxygenase involved in the metabolism of endogenous cholesterol and its oxygenated derivatives (oxysterols). Mechanistically, uses molecular oxygen inserting one oxygen atom into a substrate, and reducing the second into a water molecule, with two electrons provided by NADPH via cytochrome P450 reductase (CPR; NADPH-ferrihemoprotein reductase). Functions as a critical regulatory enzyme of bile acid biosynthesis and cholesterol homeostasis. Catalyzes the hydroxylation of carbon hydrogen bond at 7-alpha position of cholesterol, a rate-limiting step in cholesterol catabolism and bile acid biosynthesis. 7-alpha hydroxylates several oxysterols, including 4beta-hydroxycholesterol and 24-hydroxycholesterol. Catalyzes the oxidation of the 7,8 double bond of 7-dehydrocholesterol and lathosterol with direct and predominant formation of the 7-keto derivatives. The protein is Cytochrome P450 7A1 (CYP7A1) of Sus scrofa (Pig).